Here is an 853-residue protein sequence, read N- to C-terminus: MKPMLKDFSNLLLVVLCDYVLGEAEYLLLREPGHVALSNDTVYVDFQYFDGANGTLRNVSVLLLEANTNQTVTTKYLLTNQSQGTLKFECFYFKEAGDYWFTMTPEATDNSTPFPWWEKSAFLKVEWPVFHVDLNRSAKAAEGTFQVGLFTSQPLCPFPVDKPNIVVDVIFTNSLPEARRNSRQPLEIRTSKRTELAQGQWVEFGCAPVGPEAYVTVVLKLLGRDSVITSTGPIGLAQKFGYKLVMVPELTCESGVEVMVLPPPCTFVQGVVTVFKEAPRSPGKRTIHLAENSLPLGERRTIFNCTLFDMGKNKYCFDFGISSRSHFSAKEKECMLIQRNIETWGLWQPWSQCSATCGDGVRERRRVCLTSFPSRPGCPGMSLEASLCSLEECAAFQPSSPSPLQPQGPVKSNNIVTVTGISLCLFIIIATVLITLWRRFGRPAKCSTPARHNSIHSPSFRKNSDEENICELSEQRGSFSDGGDGPTGSPGDTGIPLTYRRSGPVPPEDDASGSESFQSNAQKIIPPLFSYRLAQQQLKEMKKKGLTETTKVYHVSQSPLTDTAIDAAPSAPLDLESPEEAAANKFRIKSPFPEQPAVSAGERPPSRLDLSVTQASCAISPSQTLIRKSQARHVGSRGGPSERSHARNAHFRRTASFHEARQARPFRERSMSTLTPRQAPAYSTRTRTCEQAEDRFRPQSRGAHLFPEKLEHFQEASGTGGPLNPLPKSYTLGQPLRKPDLGDRQAGLVAGIERTEPHRARRGPSPSHKSVSRKQSSPTSPKDSYQRVSPLSPSQCRKDKCQSFPTHPEFAFYDNTSFGLTEAEQRMLDLPGYFGSNEEDETTSTLSVEKLVI.

The first 24 residues, 1–24 (MKPMLKDFSNLLLVVLCDYVLGEA), serve as a signal peptide directing secretion. At 25–414 (EYLLLREPGH…QPQGPVKSNN (390 aa)) the chain is on the extracellular side. Residues Asn39, Asn53, Asn58, Asn69, Asn80, Asn135, and Asn304 are each glycosylated (N-linked (GlcNAc...) asparagine). The region spanning 341-394 (IETWGLWQPWSQCSATCGDGVRERRRVCLTSFPSRPGCPGMSLEASLCSLEECA) is the TSP type-1 domain. Intrachain disulfides connect Cys353/Cys388, Cys357/Cys393, and Cys368/Cys378. A helical membrane pass occupies residues 415–435 (IVTVTGISLCLFIIIATVLIT). The Cytoplasmic portion of the chain corresponds to 436–853 (LWRRFGRPAK…STLSVEKLVI (418 aa)). 4 disordered regions span residues 445–518 (KCST…ESFQ), 624–650 (TLIR…RNAH), 668–702 (ERSM…QSRG), and 714–800 (QEAS…RKDK). Ser464 carries the phosphoserine modification. The span at 671 to 686 (MSTLTPRQAPAYSTRT) shows a compositional bias: polar residues. Positions 687–697 (RTCEQAEDRFR) are enriched in basic and acidic residues. Over residues 767–795 (SHKSVSRKQSSPTSPKDSYQRVSPLSPSQ) the composition is skewed to polar residues.

As to quaternary structure, part of a complex composed of THSD1, PTK2/FAK1, TLN1 and VCL. Interacts with TLN1.

It localises to the endosome membrane. The protein localises to the cell junction. The protein resides in the focal adhesion. Its function is as follows. Is a positive regulator of nascent focal adhesion assembly, involved in the modulation of endothelial cell attachment to the extracellular matrix. This chain is Thrombospondin type-1 domain-containing protein 1 (THSD1), found in Pongo abelii (Sumatran orangutan).